Reading from the N-terminus, the 651-residue chain is Cytoplasmic tyrosine-protein kinase BMX (651 aa).

A PH domain is found at 4-111 (KSILEELLLK…WLKALQKEIR (108 aa)). The Btk-type zinc-finger motif lies at 113 to 149 (NPHLLIKYHSGFFVDGKFLCCQQSCKAAPGCTLWEAY). Zn(2+)-binding residues include H121, C132, C133, and C143. The region spanning 272–368 (WFAGNISRSQ…GMITRLRHPV (97 aa)) is the SH2 domain. In terms of domain architecture, Protein kinase spans 393–646 (ITLLKELGNG…QLLSAIEPLR (254 aa)). Residues 399 to 407 (LGNGQFGVV) and K421 contribute to the ATP site. D512 functions as the Proton acceptor in the catalytic mechanism. Residue Y542 is modified to Phosphotyrosine; by SRC and autocatalysis.

The protein belongs to the protein kinase superfamily. Tyr protein kinase family. TEC subfamily. As to quaternary structure, interacts with BCAR1, CAV1, MYD88, PTK2/FAK1, RUFY1, RUFY2, STAT3, TIRAP and TNFRSF1B. Zn(2+) is required as a cofactor. Post-translationally, phosphorylated in response to protein I/II and to LPS. Phosphorylation at Tyr-542 by SRC and by autocatalysis leads to activation and is required for STAT3 phosphorylation by BMX. As to expression, specifically expressed in the endocardium of the developing heart as well as in the endocardium of the left ventricle and in the endothelium of large arteries in adult mice.

It localises to the cytoplasm. The enzyme catalyses L-tyrosyl-[protein] + ATP = O-phospho-L-tyrosyl-[protein] + ADP + H(+). TEK and vascular endothelial growth factor receptor 1 (FLT1) stimulate BMX tyrosine kinase activity. Activated by integrins through the mediation of PTK2/FAK1. Activated by TNF through the mediation of TNFRSF1B. Non-receptor tyrosine kinase that plays central but diverse modulatory roles in various signaling processes involved in the regulation of actin reorganization, cell migration, cell proliferation and survival, cell adhesion, and apoptosis. Participates in signal transduction stimulated by growth factor receptors, cytokine receptors, G-protein coupled receptors, antigen receptors and integrins. Induces tyrosine phosphorylation of BCAR1 in response to integrin regulation. Activation of BMX by integrins is mediated by PTK2/FAK1, a key mediator of integrin signaling events leading to the regulation of actin cytoskeleton and cell motility. Plays a critical role in TNF-induced angiogenesis, and implicated in the signaling of TEK and FLT1 receptors, 2 important receptor families essential for angiogenesis. Required for the phosphorylation and activation of STAT3, a transcription factor involved in cell differentiation. Also involved in interleukin-6 (IL6) induced differentiation. Also plays a role in programming adaptive cytoprotection against extracellular stress in different cell systems, salivary epithelial cells, brain endothelial cells, and dermal fibroblasts. May be involved in regulation of endocytosis through its interaction with an endosomal protein RUFY1. May also play a role in the growth and differentiation of hematopoietic cells; as well as in signal transduction in endocardial and arterial endothelial cells. This chain is Cytoplasmic tyrosine-protein kinase BMX (Bmx), found in Mus musculus (Mouse).